A 112-amino-acid polypeptide reads, in one-letter code: Class I hydrophobin 7 (112 aa).

The signal sequence occupies residues 1-23 (MFARQATSVSAFLVLTLSLFAAA). 4 cysteine pairs are disulfide-bonded: Cys-36–Cys-93, Cys-43–Cys-87, Cys-44–Cys-74, and Cys-94–Cys-107. An N-linked (GlcNAc...) asparagine glycan is attached at Asn-96.

Belongs to the fungal hydrophobin family. In terms of assembly, self-assembles to form functional amyloid fibrils called rodlets. Self-assembly into fibrillar rodlets occurs spontaneously at hydrophobic:hydrophilic interfaces and the rodlets further associate laterally to form amphipathic monolayers.

The protein resides in the secreted. Its subcellular location is the cell wall. In terms of biological role, aerial growth, conidiation, and dispersal of filamentous fungi in the environment rely upon a capability of their secreting small amphipathic proteins called hydrophobins (HPBs) with low sequence identity. Class I can self-assemble into an outermost layer of rodlet bundles on aerial cell surfaces, conferring cellular hydrophobicity that supports fungal growth, development and dispersal; whereas Class II form highly ordered films at water-air interfaces through intermolecular interactions but contribute nothing to the rodlet structure. The protein is Class I hydrophobin 7 of Flammulina velutipes (Agaricus velutipes).